The following is a 133-amino-acid chain: Large ribosomal subunit protein uL16c (133 aa).

This sequence belongs to the universal ribosomal protein uL16 family. Part of the 50S ribosomal subunit.

It localises to the plastid. Its subcellular location is the chloroplast. This Liriodendron tulipifera (Tuliptree) protein is Large ribosomal subunit protein uL16c.